The primary structure comprises 340 residues: Ketol-acid reductoisomerase (NADP(+)) (340 aa).

The KARI N-terminal Rossmann domain maps to 3–182 (VQMEYEKDVK…GAARVGLLET (180 aa)). NADP(+) contacts are provided by residues 26–29 (YGSQ), arginine 49, serine 53, and 83–86 (DEIQ). Residue histidine 108 is part of the active site. Glycine 134 contacts NADP(+). The KARI C-terminal knotted domain occupies 183-328 (TYKEETEEDL…AELRKAMPFV (146 aa)). Residues aspartate 191, glutamate 195, glutamate 227, and glutamate 231 each coordinate Mg(2+). Serine 252 contacts substrate.

Belongs to the ketol-acid reductoisomerase family. It depends on Mg(2+) as a cofactor.

It catalyses the reaction (2R)-2,3-dihydroxy-3-methylbutanoate + NADP(+) = (2S)-2-acetolactate + NADPH + H(+). The catalysed reaction is (2R,3R)-2,3-dihydroxy-3-methylpentanoate + NADP(+) = (S)-2-ethyl-2-hydroxy-3-oxobutanoate + NADPH + H(+). The protein operates within amino-acid biosynthesis; L-isoleucine biosynthesis; L-isoleucine from 2-oxobutanoate: step 2/4. Its pathway is amino-acid biosynthesis; L-valine biosynthesis; L-valine from pyruvate: step 2/4. Involved in the biosynthesis of branched-chain amino acids (BCAA). Catalyzes an alkyl-migration followed by a ketol-acid reduction of (S)-2-acetolactate (S2AL) to yield (R)-2,3-dihydroxy-isovalerate. In the isomerase reaction, S2AL is rearranged via a Mg-dependent methyl migration to produce 3-hydroxy-3-methyl-2-ketobutyrate (HMKB). In the reductase reaction, this 2-ketoacid undergoes a metal-dependent reduction by NADPH to yield (R)-2,3-dihydroxy-isovalerate. The polypeptide is Ketol-acid reductoisomerase (NADP(+)) (Streptococcus pneumoniae (strain Hungary19A-6)).